A 376-amino-acid chain; its full sequence is Alcohol dehydrogenase class-3 (376 aa).

Zn(2+) is bound by residues C47, H69, C99, C102, C105, C113, and C176.

Belongs to the zinc-containing alcohol dehydrogenase family. Class-III subfamily. In terms of assembly, homodimer. Zn(2+) is required as a cofactor. As to expression, expressed in the skeletal muscle, heart, gill filaments and liver, with highest levels in the kidney.

The protein resides in the cytoplasm. The enzyme catalyses a primary alcohol + NAD(+) = an aldehyde + NADH + H(+). The catalysed reaction is a secondary alcohol + NAD(+) = a ketone + NADH + H(+). It carries out the reaction S-(hydroxymethyl)glutathione + NADP(+) = S-formylglutathione + NADPH + H(+). It catalyses the reaction S-(hydroxymethyl)glutathione + NAD(+) = S-formylglutathione + NADH + H(+). The enzyme catalyses S-nitrosoglutathione + NADH + H(+) = S-(hydroxysulfenamide)glutathione + NAD(+). Class-III ADH is remarkably ineffective in oxidizing ethanol, but it readily catalyzes the oxidation of long-chain primary alcohols and the oxidation of S-(hydroxymethyl) glutathione. Also acts as a S-nitroso-glutathione reductase by catalyzing the NADH-dependent reduction of S-nitrosoglutathione, thereby regulating protein S-nitrosylation. The chain is Alcohol dehydrogenase class-3 from Sparus aurata (Gilthead sea bream).